The following is a 165-amino-acid chain: Nucleotide-binding protein LBF_1338 (165 aa).

This sequence belongs to the YajQ family.

Functionally, nucleotide-binding protein. In Leptospira biflexa serovar Patoc (strain Patoc 1 / Ames), this protein is Nucleotide-binding protein LBF_1338.